We begin with the raw amino-acid sequence, 749 residues long: Catalase-peroxidase (749 aa).

The segment at residues Trp98–Tyr234 is a cross-link (tryptophyl-tyrosyl-methioninium (Trp-Tyr) (with M-260)). The active-site Proton acceptor is the His99. A cross-link (tryptophyl-tyrosyl-methioninium (Tyr-Met) (with W-98)) is located at residues Tyr234–Met260. His275 is a binding site for heme b.

It belongs to the peroxidase family. Peroxidase/catalase subfamily. In terms of assembly, homodimer or homotetramer. Heme b is required as a cofactor. Formation of the three residue Trp-Tyr-Met cross-link is important for the catalase, but not the peroxidase activity of the enzyme.

It is found in the cytoplasm. It catalyses the reaction H2O2 + AH2 = A + 2 H2O. The catalysed reaction is 2 H2O2 = O2 + 2 H2O. Its function is as follows. Bifunctional enzyme with both catalase and broad-spectrum peroxidase activity. The polypeptide is Catalase-peroxidase (Mycosarcoma maydis (Corn smut fungus)).